The following is a 312-amino-acid chain: Aspartate carbamoyltransferase catalytic subunit (312 aa).

Carbamoyl phosphate-binding residues include arginine 58 and threonine 59. Lysine 86 contacts L-aspartate. Positions 108, 136, and 139 each coordinate carbamoyl phosphate. L-aspartate is bound by residues arginine 169 and arginine 223. Positions 264 and 265 each coordinate carbamoyl phosphate.

The protein belongs to the aspartate/ornithine carbamoyltransferase superfamily. ATCase family. As to quaternary structure, heterododecamer (2C3:3R2) of six catalytic PyrB chains organized as two trimers (C3), and six regulatory PyrI chains organized as three dimers (R2).

It catalyses the reaction carbamoyl phosphate + L-aspartate = N-carbamoyl-L-aspartate + phosphate + H(+). Its pathway is pyrimidine metabolism; UMP biosynthesis via de novo pathway; (S)-dihydroorotate from bicarbonate: step 2/3. In terms of biological role, catalyzes the condensation of carbamoyl phosphate and aspartate to form carbamoyl aspartate and inorganic phosphate, the committed step in the de novo pyrimidine nucleotide biosynthesis pathway. The sequence is that of Aspartate carbamoyltransferase catalytic subunit from Syntrophomonas wolfei subsp. wolfei (strain DSM 2245B / Goettingen).